The sequence spans 678 residues: UvrABC system protein C (678 aa).

Residues 16 to 95 (VEPGVYRFRD…IKEFDPRFNI (80 aa)) form the GIY-YIG domain. The region spanning 208 to 243 (DRLIREMEQQMTAAAEDLDFERAARLRDNIGAMRRA) is the UVR domain. The span at 649–667 (EAPPEPGAEAPPDSGAAAA) shows a compositional bias: low complexity. The disordered stretch occupies residues 649-678 (EAPPEPGAEAPPDSGAAAAVMGNDQSRVPG).

This sequence belongs to the UvrC family. As to quaternary structure, interacts with UvrB in an incision complex.

Its subcellular location is the cytoplasm. In terms of biological role, the UvrABC repair system catalyzes the recognition and processing of DNA lesions. UvrC both incises the 5' and 3' sides of the lesion. The N-terminal half is responsible for the 3' incision and the C-terminal half is responsible for the 5' incision. In Mycolicibacterium gilvum (strain PYR-GCK) (Mycobacterium gilvum (strain PYR-GCK)), this protein is UvrABC system protein C.